The primary structure comprises 364 residues: MAGTVTVPSASVPSTPLLKDELDIVIPTIRNLDFLEMWRPFFQPYHLIIVQDGDPTKTIRVPEGFDYELYNRNDINRILGPKASCISFKDSACRCFGYMVSKKKYVFTIDDDCFVAKDPSGKDINALEQHIKNLLSPSTPFFFNTLYDPYREGADFVRGYPFSLREGAKTAVSHGLWLNIPDYDAPTQMVKPRERNSRYVDAVMTVPKGTLFPMCGMNLAFDRDLIGPAMYFGLMGDGQPIGRYDDMWAGWCMKVICDHLSLGVKTGLPYIWHSKASNPFVNLKKEYKGIFWQEDIIPFFQNATIPKECDTVQKCYLSLAEQVREKLGKIDPYFVKLADAMVTWIEAWDELNPSTAAVENGKAK.

A DXD motif motif is present at residues 110–112; sequence DDD. N-linked (Glc...) arginine glycosylation occurs at Arg158.

This sequence belongs to the RGP family. Heteromers with UAM2 and UAM3. Mn(2+) is required as a cofactor. The cofactor is Mg(2+). In terms of processing, reversibly glycosylated in vitro at Arg-158 by UDP-glucose. Reversibly glycosylated by UDP-xylose and UDP-galactose.

Its subcellular location is the golgi apparatus. It carries out the reaction UDP-beta-L-arabinofuranose = UDP-beta-L-arabinopyranose. Functionally, UDP-L-arabinose mutase involved in the biosynthesis of cell wall non-cellulosic polysaccharides. Catalyzes the interconvertion of UDP-L-arabinopyranose (UDP-Arap) and UDP-L-arabinofuranose (UDP-Araf). Preferentially catalyzes the formation of UDP-Arap from UDP-Araf. At thermodynamic equilibrium in vitro the ratio of the pyranose form over the furanose form is 90:10. Is probably active as heteromer in vivo. In Oryza sativa subsp. japonica (Rice), this protein is UDP-arabinopyranose mutase 1.